A 274-amino-acid chain; its full sequence is Tropomyosin (274 aa).

The span at 1 to 35 (MKLEKDNAMDRADTLEQQNKEANNRAEKSEEEVHN) shows a compositional bias: basic and acidic residues. The tract at residues 1–45 (MKLEKDNAMDRADTLEQQNKEANNRAEKSEEEVHNLQKRMQQLEN) is disordered. Residues 1–274 (MKLEKDNAMD…DQTFSELSGY (274 aa)) are a coiled coil.

Belongs to the tropomyosin family. In terms of assembly, homodimer.

Functionally, tropomyosin, in association with the troponin complex, plays a central role in the calcium dependent regulation of muscle contraction. In Metapenaeus ensis (Greasyback shrimp), this protein is Tropomyosin.